Here is a 221-residue protein sequence, read N- to C-terminus: MKRFLILTPMVLALCGCESPALLVQKDDAEFAPPANLIQPATVTEGGGLFQPANSWSLLQDRRAYRIGDILTVILDESTQSSKQAKTNFGKKNDMSLGVPEVLGKKLNKFGGSISGKRDFDGSATSAQQNMLRGSITVAVHQVLPNGVLVIRGEKWLTLNQGDEYMRVTGLVRADDVARDNSVSSQRIANARISYAGRGALSDANSAGWLTRFFNHPLFPI.

An N-terminal signal peptide occupies residues 1–16 (MKRFLILTPMVLALCG). The N-palmitoyl cysteine moiety is linked to residue Cys-17. Cys-17 carries S-diacylglycerol cysteine lipidation.

The protein belongs to the FlgH family. The basal body constitutes a major portion of the flagellar organelle and consists of four rings (L,P,S, and M) mounted on a central rod.

It localises to the cell outer membrane. The protein resides in the bacterial flagellum basal body. Its function is as follows. Assembles around the rod to form the L-ring and probably protects the motor/basal body from shearing forces during rotation. This Yersinia pestis protein is Flagellar L-ring protein 1.